A 359-amino-acid chain; its full sequence is Probable 2-oxoacid dependent dioxygenase (359 aa).

Residues 207 to 308 (KGLWMLCHCF…ISVACFFVHT (102 aa)) enclose the Fe2OG dioxygenase domain. The Fe cation site is built by His231, Asp233, and His287. The tract at residues 329–359 (PPKYRDTTSESSNHYVARKPNGNSSLDHLRI) is disordered. Positions 349 to 359 (NGNSSLDHLRI) are enriched in polar residues.

It belongs to the iron/ascorbate-dependent oxidoreductase family. Fe(2+) is required as a cofactor. As to expression, expressed in leaves and seeds. All cultivars with seed-only-functional allele have low to non-detectable GSL-OH expression in the leaves.

The enzyme catalyses gluconapin + AH2 + O2 = progoitrin + A + H2O. Necessary for the hydroxylation of but-3-enyl glucosinolate to 2-hydroxybut-3-enyl glucosinolate, which is toxic to insects, bacteria and nematodes, inhibits seed germination and produces bitter flavors. The polypeptide is Probable 2-oxoacid dependent dioxygenase (Arabidopsis thaliana (Mouse-ear cress)).